We begin with the raw amino-acid sequence, 61 residues long: Putative antitoxin PYRAB11980 (61 aa).

Belongs to the UPF0165 family.

Functionally, possibly the antitoxin component of a type II toxin-antitoxin (TA) system. This chain is Putative antitoxin PYRAB11980, found in Pyrococcus abyssi (strain GE5 / Orsay).